Reading from the N-terminus, the 130-residue chain is Small ribosomal subunit protein uS9 (130 aa).

A disordered region spans residues Lys99–Arg130. The segment covering Lys111–Arg130 has biased composition (basic residues).

The protein belongs to the universal ribosomal protein uS9 family.

This chain is Small ribosomal subunit protein uS9, found in Staphylococcus aureus (strain Mu3 / ATCC 700698).